Here is a 466-residue protein sequence, read N- to C-terminus: Ribulose bisphosphate carboxylase large chain (466 aa).

K5 is subject to N6,N6,N6-trimethyllysine. Residues N114 and T164 each coordinate substrate. Catalysis depends on K166, which acts as the Proton acceptor. K168 lines the substrate pocket. Residues K192, D194, and E195 each coordinate Mg(2+). K192 carries the N6-carboxylysine modification. Residue H285 is the Proton acceptor of the active site. Substrate-binding residues include R286, H318, and S370.

This sequence belongs to the RuBisCO large chain family. Type I subfamily. Heterohexadecamer of 8 large chains and 8 small chains; disulfide-linked. The disulfide link is formed within the large subunit homodimers. The cofactor is Mg(2+). In terms of processing, the disulfide bond which can form in the large chain dimeric partners within the hexadecamer appears to be associated with oxidative stress and protein turnover.

The protein localises to the plastid. Its subcellular location is the chloroplast. The enzyme catalyses 2 (2R)-3-phosphoglycerate + 2 H(+) = D-ribulose 1,5-bisphosphate + CO2 + H2O. The catalysed reaction is D-ribulose 1,5-bisphosphate + O2 = 2-phosphoglycolate + (2R)-3-phosphoglycerate + 2 H(+). In terms of biological role, ruBisCO catalyzes two reactions: the carboxylation of D-ribulose 1,5-bisphosphate, the primary event in carbon dioxide fixation, as well as the oxidative fragmentation of the pentose substrate in the photorespiration process. Both reactions occur simultaneously and in competition at the same active site. This Caltha palustris (Yellow marsh marigold) protein is Ribulose bisphosphate carboxylase large chain.